A 261-amino-acid polypeptide reads, in one-letter code: Guanine nucleotide exchange factor BopE (261 aa).

It belongs to the GEF (guanine exchange factor) SopE family. Monomer. Interacts with human CDC42.

The protein resides in the secreted. In terms of biological role, activator for both CDC42 and RAC1 by directly interacting with these Rho GTPases and acting as a guanine nucleotide exchange factor (GEF). This activation results in actin cytoskeleton rearrangements and stimulates membrane ruffling, thus promoting bacterial entry into non-phagocytic cells. The protein is Guanine nucleotide exchange factor BopE (bopE) of Burkholderia mallei (strain NCTC 10247).